Here is a 130-residue protein sequence, read N- to C-terminus: Histone H2B (130 aa).

Residues 1–31 (MAKSARHVTGKAPSSLDAHDRKKSKKKSSSM) are disordered. A Glycyl lysine isopeptide (Lys-Gly) (interchain with G-Cter in ubiquitin) cross-link involves residue lysine 122.

This sequence belongs to the histone H2B family. As to quaternary structure, the nucleosome is a histone octamer containing two molecules each of H2A, H2B, H3 and H4 assembled in one H3-H4 heterotetramer and two H2A-H2B heterodimers. The octamer wraps approximately 147 bp of DNA. Monoubiquitinated to form H2BK123ub1. H2BK123ub1 gives a specific tag for epigenetic transcriptional activation and is also prerequisite for H3K4me and H3K79me formation.

It localises to the nucleus. The protein localises to the chromosome. Functionally, core component of nucleosome. Nucleosomes wrap and compact DNA into chromatin, limiting DNA accessibility to the cellular machineries which require DNA as a template. Histones thereby play a central role in transcription regulation, DNA repair, DNA replication and chromosomal stability. DNA accessibility is regulated via a complex set of post-translational modifications of histones, also called histone code, and nucleosome remodeling. The chain is Histone H2B (HTB1) from Encephalitozoon cuniculi (strain GB-M1) (Microsporidian parasite).